The sequence spans 147 residues: UPF0735 ACT domain-containing protein BPUM_2431 (147 aa).

The region spanning 70–145 is the ACT domain; that stretch reads TLFFHLEDRS…FVEKVEILGS (76 aa).

The protein belongs to the UPF0735 family.

This chain is UPF0735 ACT domain-containing protein BPUM_2431, found in Bacillus pumilus (strain SAFR-032).